A 75-amino-acid chain; its full sequence is MRKSDRSFYNWLMTNRNSMAANEVQQFANNAFLDSSFPKQSSDFDELSQYLEENTTYLMSMTTFDEAWSLYNAER.

Belongs to the UPF0346 family.

This Leuconostoc mesenteroides subsp. mesenteroides (strain ATCC 8293 / DSM 20343 / BCRC 11652 / CCM 1803 / JCM 6124 / NCDO 523 / NBRC 100496 / NCIMB 8023 / NCTC 12954 / NRRL B-1118 / 37Y) protein is UPF0346 protein LEUM_0763.